A 383-amino-acid polypeptide reads, in one-letter code: Dual-specificity RNA methyltransferase RlmN (383 aa).

Glu95 (proton acceptor) is an active-site residue. In terms of domain architecture, Radical SAM core spans 101–349 (EETRGTLCVS…TTVRKTRGDD (249 aa)). Cys108 and Cys354 form a disulfide bridge. Residues Cys115, Cys119, and Cys122 each coordinate [4Fe-4S] cluster. S-adenosyl-L-methionine contacts are provided by residues 180 to 181 (GE), Ser212, 234 to 236 (SLH), and Asn311. The active-site S-methylcysteine intermediate is the Cys354.

Belongs to the radical SAM superfamily. RlmN family. It depends on [4Fe-4S] cluster as a cofactor.

It localises to the cytoplasm. It carries out the reaction adenosine(2503) in 23S rRNA + 2 reduced [2Fe-2S]-[ferredoxin] + 2 S-adenosyl-L-methionine = 2-methyladenosine(2503) in 23S rRNA + 5'-deoxyadenosine + L-methionine + 2 oxidized [2Fe-2S]-[ferredoxin] + S-adenosyl-L-homocysteine. The catalysed reaction is adenosine(37) in tRNA + 2 reduced [2Fe-2S]-[ferredoxin] + 2 S-adenosyl-L-methionine = 2-methyladenosine(37) in tRNA + 5'-deoxyadenosine + L-methionine + 2 oxidized [2Fe-2S]-[ferredoxin] + S-adenosyl-L-homocysteine. Specifically methylates position 2 of adenine 2503 in 23S rRNA and position 2 of adenine 37 in tRNAs. m2A2503 modification seems to play a crucial role in the proofreading step occurring at the peptidyl transferase center and thus would serve to optimize ribosomal fidelity. In Paraburkholderia phytofirmans (strain DSM 17436 / LMG 22146 / PsJN) (Burkholderia phytofirmans), this protein is Dual-specificity RNA methyltransferase RlmN.